Here is a 416-residue protein sequence, read N- to C-terminus: Phosphatidylinositol 5-phosphate 4-kinase type-2 beta (416 aa).

N-acetylserine is present on S2. At T8 the chain carries Phosphothreonine. S19 carries the post-translational modification Phosphoserine. A PIPK domain is found at 38 to 415 (ASEPILSVLM…RFNEFMSNIL (378 aa)). The interval 64–70 (VMLMPDD) is required for interaction with PIP5K1A. Residues K94 and K150 each carry the N6-acetyllysine modification. ATP-binding positions include 202–204 (RNV) and K214. Residues 203 to 204 (NV) and K214 each bind GTP. T322 bears the Phosphothreonine mark. Phosphoserine is present on S326. D369 lines the GTP pocket.

Homodimer. Binds TNFRSF1A. Interacts with PIP4K2A; the interaction suppresses ubiquitination by the SPOP/CUL3 complex. In terms of processing, ubiquitinated by the SPOP/CUL3 complex. Ubiquitination is stimulated by PtdIns5P levels. Phosphorylated on serine residues. As to expression, highly expressed in brain, heart, pancreas, skeletal muscle and kidney. Detected at lower levels in placenta, lung and liver.

Its subcellular location is the endoplasmic reticulum membrane. It is found in the cell membrane. The protein resides in the nucleus. It localises to the cytoplasm. It catalyses the reaction a 1,2-diacyl-sn-glycero-3-phospho-(1D-myo-inositol-5-phosphate) + ATP = a 1,2-diacyl-sn-glycero-3-phospho-(1D-myo-inositol-4,5-bisphosphate) + ADP + H(+). It carries out the reaction 1,2-dihexadecanoyl-sn-glycero-3-phospho-(1D-myo-inositol-5-phosphate) + ATP = 1,2-dihexadecanoyl-sn-glycero-3-phospho-(1D-myo-inositol-4,5-bisphosphate) + ADP + H(+). The catalysed reaction is 1,2-dihexadecanoyl-sn-glycero-3-phospho-(1D-myo-inositol-5-phosphate) + GTP = 1,2-dihexadecanoyl-sn-glycero-3-phospho-(1D-myo-inositol-4,5-bisphosphate) + GDP + H(+). Its function is as follows. Participates in the biosynthesis of phosphatidylinositol 4,5-bisphosphate. Preferentially utilizes GTP, rather than ATP, for PI(5)P phosphorylation and its activity reflects changes in direct proportion to the physiological GTP concentration. Its GTP-sensing activity is critical for metabolic adaptation. PIP4Ks negatively regulate insulin signaling through a catalytic-independent mechanism. They interact with PIP5Ks and suppress PIP5K-mediated PtdIns(4,5)P2 synthesis and insulin-dependent conversion to PtdIns(3,4,5)P3. This Homo sapiens (Human) protein is Phosphatidylinositol 5-phosphate 4-kinase type-2 beta.